We begin with the raw amino-acid sequence, 619 residues long: Isocitrate dehydrogenase kinase/phosphatase (619 aa).

ATP is bound by residues 354-360 (APGIRGM) and lysine 375. Aspartate 409 is an active-site residue.

Belongs to the AceK family.

The protein resides in the cytoplasm. It catalyses the reaction L-seryl-[isocitrate dehydrogenase] + ATP = O-phospho-L-seryl-[isocitrate dehydrogenase] + ADP + H(+). Functionally, bifunctional enzyme which can phosphorylate or dephosphorylate isocitrate dehydrogenase (IDH) on a specific serine residue. This is a regulatory mechanism which enables bacteria to bypass the Krebs cycle via the glyoxylate shunt in response to the source of carbon. When bacteria are grown on glucose, IDH is fully active and unphosphorylated, but when grown on acetate or ethanol, the activity of IDH declines drastically concomitant with its phosphorylation. The protein is Isocitrate dehydrogenase kinase/phosphatase of Bordetella bronchiseptica (strain ATCC BAA-588 / NCTC 13252 / RB50) (Alcaligenes bronchisepticus).